An 823-amino-acid chain; its full sequence is ATP-dependent DNA helicase At3g02060, chloroplastic (823 aa).

Residues 1 to 53 (MMSLLPNPDPITVPLVLKLCSFPPPRRLFSLRLRRFTRKSSSLLPLVAVSSLS) constitute a chloroplast transit peptide. Residues 285 to 447 (LTERETPMDR…LTGFRDASLI (163 aa)) enclose the Helicase ATP-binding domain. 298 to 305 (GDVGFGKT) lines the ATP pocket. Positions 400-403 (DEEQ) match the DEEQ box motif. Residues 465–622 (RKEKVIEAIK…GFQLAEKDMG (158 aa)) enclose the Helicase C-terminal domain.

It belongs to the helicase family.

It localises to the plastid. The protein localises to the chloroplast. The enzyme catalyses ATP + H2O = ADP + phosphate + H(+). The protein is ATP-dependent DNA helicase At3g02060, chloroplastic of Arabidopsis thaliana (Mouse-ear cress).